The primary structure comprises 404 residues: Putative aspartate aminotransferase, cytoplasmic 2 (404 aa).

At lysine 249 the chain carries N6-(pyridoxal phosphate)lysine.

The protein belongs to the class-I pyridoxal-phosphate-dependent aminotransferase family. As to quaternary structure, homodimer. Requires pyridoxal 5'-phosphate as cofactor.

Its subcellular location is the cytoplasm. The catalysed reaction is L-aspartate + 2-oxoglutarate = oxaloacetate + L-glutamate. The chain is Putative aspartate aminotransferase, cytoplasmic 2 (Got1l1) from Mus musculus (Mouse).